The chain runs to 166 residues: MFPMVTEFMNYGQQTVRAARYIGQGFMITLSHANRLPVTIQYPYEKLITSERFRGRIHFEFDKCIACEVCVRVCPIDLPVVDWKLETDIRKKRLLNYSIDFGICIFCGNCVEYCPTNCLSMTEEYELSTYDRHELNYNQIALGRLPMSIIDDYTIRTILNLPEIKN.

4Fe-4S ferredoxin-type domains lie at 55 to 84 (GRIH…VDWK) and 95 to 124 (LNYS…MTEE). Cys64, Cys67, Cys70, Cys74, Cys104, Cys107, Cys110, and Cys114 together coordinate [4Fe-4S] cluster.

This sequence belongs to the complex I 23 kDa subunit family. As to quaternary structure, NDH is composed of at least 16 different subunits, 5 of which are encoded in the nucleus. [4Fe-4S] cluster serves as cofactor.

Its subcellular location is the plastid. It localises to the chloroplast thylakoid membrane. The catalysed reaction is a plastoquinone + NADH + (n+1) H(+)(in) = a plastoquinol + NAD(+) + n H(+)(out). It carries out the reaction a plastoquinone + NADPH + (n+1) H(+)(in) = a plastoquinol + NADP(+) + n H(+)(out). Functionally, NDH shuttles electrons from NAD(P)H:plastoquinone, via FMN and iron-sulfur (Fe-S) centers, to quinones in the photosynthetic chain and possibly in a chloroplast respiratory chain. The immediate electron acceptor for the enzyme in this species is believed to be plastoquinone. Couples the redox reaction to proton translocation, and thus conserves the redox energy in a proton gradient. In Lasianthaea macrocephala (Lipochaeta macrocephala), this protein is NAD(P)H-quinone oxidoreductase subunit I, chloroplastic.